A 441-amino-acid chain; its full sequence is Amino-acid acetyltransferase (441 aa).

The 140-residue stretch at 295 to 434 (EQVRRATIND…QELYNYQRRS (140 aa)) folds into the N-acetyltransferase domain.

It belongs to the acetyltransferase family. ArgA subfamily. As to quaternary structure, homohexamer.

It localises to the cytoplasm. It catalyses the reaction L-glutamate + acetyl-CoA = N-acetyl-L-glutamate + CoA + H(+). It functions in the pathway amino-acid biosynthesis; L-arginine biosynthesis; N(2)-acetyl-L-ornithine from L-glutamate: step 1/4. The protein is Amino-acid acetyltransferase of Yersinia enterocolitica serotype O:8 / biotype 1B (strain NCTC 13174 / 8081).